We begin with the raw amino-acid sequence, 331 residues long: Pectinesterase (331 aa).

An N-terminal signal peptide occupies residues 1-17; sequence MVKSVLASALFAVSALA. Position 139 (glutamine 139) interacts with substrate. Aspartate 162 serves as the catalytic Proton donor. Aspartate 183 acts as the Nucleophile in catalysis. Substrate-binding residues include arginine 248 and tryptophan 250.

This sequence belongs to the pectinesterase family.

It is found in the secreted. The catalysed reaction is [(1-&gt;4)-alpha-D-galacturonosyl methyl ester](n) + n H2O = [(1-&gt;4)-alpha-D-galacturonosyl](n) + n methanol + n H(+). It functions in the pathway glycan metabolism; pectin degradation; 2-dehydro-3-deoxy-D-gluconate from pectin: step 1/5. Its function is as follows. Involved in maceration and soft-rotting of plant tissue. The polypeptide is Pectinesterase (pme1) (Aspergillus aculeatus).